Reading from the N-terminus, the 187-residue chain is Early E3 20.6 kDa glycoprotein (187 aa).

N-linked (GlcNAc...) asparagine; by host glycans are attached at residues Asn30, Asn73, Asn117, Asn134, and Asn135.

Belongs to the adenoviridae E3_20 family.

The protein is Early E3 20.6 kDa glycoprotein of Human adenovirus B serotype 35 (HAdV-35).